An 89-amino-acid chain; its full sequence is Small ribosomal subunit protein uS15 (89 aa).

It belongs to the universal ribosomal protein uS15 family. As to quaternary structure, part of the 30S ribosomal subunit. Forms a bridge to the 50S subunit in the 70S ribosome, contacting the 23S rRNA.

Functionally, one of the primary rRNA binding proteins, it binds directly to 16S rRNA where it helps nucleate assembly of the platform of the 30S subunit by binding and bridging several RNA helices of the 16S rRNA. Forms an intersubunit bridge (bridge B4) with the 23S rRNA of the 50S subunit in the ribosome. In Chlamydia caviae (strain ATCC VR-813 / DSM 19441 / 03DC25 / GPIC) (Chlamydophila caviae), this protein is Small ribosomal subunit protein uS15.